A 428-amino-acid chain; its full sequence is Glutamyl-tRNA reductase (428 aa).

Residues threonine 50 to arginine 53, serine 110, glutamate 115 to glutamine 117, and glutamine 121 contribute to the substrate site. The active-site Nucleophile is the cysteine 51. Glycine 190–glycine 195 is an NADP(+) binding site.

The protein belongs to the glutamyl-tRNA reductase family. As to quaternary structure, homodimer.

The catalysed reaction is (S)-4-amino-5-oxopentanoate + tRNA(Glu) + NADP(+) = L-glutamyl-tRNA(Glu) + NADPH + H(+). It functions in the pathway porphyrin-containing compound metabolism; protoporphyrin-IX biosynthesis; 5-aminolevulinate from L-glutamyl-tRNA(Glu): step 1/2. Its function is as follows. Catalyzes the NADPH-dependent reduction of glutamyl-tRNA(Glu) to glutamate 1-semialdehyde (GSA). The polypeptide is Glutamyl-tRNA reductase (Campylobacter curvus (strain 525.92)).